The chain runs to 169 residues: Large ribosomal subunit protein uL10 (169 aa).

It belongs to the universal ribosomal protein uL10 family. In terms of assembly, part of the ribosomal stalk of the 50S ribosomal subunit. The N-terminus interacts with L11 and the large rRNA to form the base of the stalk. The C-terminus forms an elongated spine to which L12 dimers bind in a sequential fashion forming a multimeric L10(L12)X complex.

In terms of biological role, forms part of the ribosomal stalk, playing a central role in the interaction of the ribosome with GTP-bound translation factors. In Rickettsia felis (strain ATCC VR-1525 / URRWXCal2) (Rickettsia azadi), this protein is Large ribosomal subunit protein uL10.